The primary structure comprises 565 residues: NAD-dependent malic enzyme (565 aa).

Y104 acts as the Proton donor in catalysis. An NAD(+)-binding site is contributed by R157. The active-site Proton acceptor is the K175. A divalent metal cation-binding residues include E246, D247, and D270. Residues D270 and N418 each coordinate NAD(+).

The protein belongs to the malic enzymes family. In terms of assembly, homotetramer. The cofactor is Mg(2+). Mn(2+) serves as cofactor.

The catalysed reaction is (S)-malate + NAD(+) = pyruvate + CO2 + NADH. It carries out the reaction oxaloacetate + H(+) = pyruvate + CO2. The chain is NAD-dependent malic enzyme from Serratia proteamaculans (strain 568).